A 108-amino-acid chain; its full sequence is MSMIRIAPEVHLVMDPDTAVVAEEREDSILYSMDPVFERMDKLDGIAEDLLNSLSPSKPLLNSWPGRENTSYMAGIYGNAFYGIVVGLAFSGLLALIIFIQRLIEGGM.

Residues 80–100 (AFYGIVVGLAFSGLLALIIFI) traverse the membrane as a helical segment.

The protein belongs to the MtrB family. The complex is composed of 8 subunits; MtrA, MtrB, MtrC, MtrD, MtrE, MtrF, MtrG and MtrH.

The protein localises to the cell membrane. The enzyme catalyses 5-methyl-5,6,7,8-tetrahydromethanopterin + coenzyme M + 2 Na(+)(in) = 5,6,7,8-tetrahydromethanopterin + methyl-coenzyme M + 2 Na(+)(out). The protein operates within one-carbon metabolism; methanogenesis from CO(2); methyl-coenzyme M from 5,10-methylene-5,6,7,8-tetrahydromethanopterin: step 2/2. Its function is as follows. Part of a complex that catalyzes the formation of methyl-coenzyme M and tetrahydromethanopterin from coenzyme M and methyl-tetrahydromethanopterin. This is an energy-conserving, sodium-ion translocating step. The chain is Tetrahydromethanopterin S-methyltransferase subunit B from Methanosarcina acetivorans (strain ATCC 35395 / DSM 2834 / JCM 12185 / C2A).